The primary structure comprises 304 residues: Ribosomal RNA small subunit methyltransferase H (304 aa).

S-adenosyl-L-methionine contacts are provided by residues 47–49 (GGH), aspartate 66, phenylalanine 93, aspartate 108, and glutamine 115.

This sequence belongs to the methyltransferase superfamily. RsmH family.

The protein resides in the cytoplasm. The enzyme catalyses cytidine(1402) in 16S rRNA + S-adenosyl-L-methionine = N(4)-methylcytidine(1402) in 16S rRNA + S-adenosyl-L-homocysteine + H(+). Functionally, specifically methylates the N4 position of cytidine in position 1402 (C1402) of 16S rRNA. The sequence is that of Ribosomal RNA small subunit methyltransferase H from Prochlorococcus marinus (strain NATL2A).